We begin with the raw amino-acid sequence, 500 residues long: NAD(P)H-quinone oxidoreductase chain 4, chloroplastic (500 aa).

14 helical membrane passes run 4 to 24, 37 to 57, 87 to 107, 113 to 130, 134 to 154, 167 to 187, 208 to 228, 242 to 262, 272 to 292, 305 to 325, 330 to 350, 386 to 406, 411 to 431, and 462 to 482; these read FPWL…IFFL, ICIC…HFQL, IGPI…AWPI, LFHF…GSFS, LLLF…LLAM, FILY…GVAL, VLEI…LPII, HYST…YGLI, AHSI…IYAA, IAYS…SLTD, GALL…FLAG, LALP…GIIT, VLIP…LTPI, and LFLS…PDFV.

It belongs to the complex I subunit 4 family.

The protein localises to the plastid. It localises to the chloroplast thylakoid membrane. The enzyme catalyses a plastoquinone + NADH + (n+1) H(+)(in) = a plastoquinol + NAD(+) + n H(+)(out). It catalyses the reaction a plastoquinone + NADPH + (n+1) H(+)(in) = a plastoquinol + NADP(+) + n H(+)(out). The protein is NAD(P)H-quinone oxidoreductase chain 4, chloroplastic of Atropa belladonna (Belladonna).